A 557-amino-acid polypeptide reads, in one-letter code: Eudesmanediol synthase (557 aa).

The Mg(2+) site is built by aspartate 310 and aspartate 314. Residues aspartate 310, aspartate 314, and arginine 450 each coordinate substrate. The DDXXD motif motif lies at 310 to 314; it reads DDTFD. Mg(2+) is bound by residues asparagine 453 and serine 457.

It belongs to the terpene synthase family. Monomer. Mg(2+) serves as cofactor. The cofactor is Mn(2+).

It localises to the cytoplasm. It catalyses the reaction (2E,6E)-farnesyl diphosphate + 2 H2O = 7-epi-ent-eudesmane-5,11-diol + diphosphate. It functions in the pathway secondary metabolite biosynthesis; terpenoid biosynthesis. In terms of biological role, component of the volatile terpenes biosynthesis pathways. Dihydroxylated sesquiterpenoid synthase that generates dually hydroxylated products directly from (E,E)-farnesyl diphosphate, primarily eudesmane-2,11-diol, along with two closely related structural isomers. The chain is Eudesmanediol synthase from Zea mays (Maize).